The sequence spans 292 residues: Non-homologous end joining protein Ku (292 aa).

The region spanning 12–196 is the Ku domain; that stretch reads KLSLVTCPVV…KITKDMVELA (185 aa). A disordered region spans residues 231 to 292; sequence KPIKLPEPEE…RSAARQRKAG (62 aa). A compositionally biased stretch (basic residues) spans 271-292; it reads APAHRRPAKKAHRSAARQRKAG.

This sequence belongs to the prokaryotic Ku family. Homodimer. Interacts with LigD.

In terms of biological role, with LigD forms a non-homologous end joining (NHEJ) DNA repair enzyme, which repairs dsDNA breaks with reduced fidelity. Binds linear dsDNA with 5'- and 3'- overhangs but not closed circular dsDNA nor ssDNA. Recruits and stimulates the ligase activity of LigD. In Bradyrhizobium sp. (strain ORS 278), this protein is Non-homologous end joining protein Ku.